The chain runs to 175 residues: Endothelin-2 (175 aa).

A signal peptide spans 1-21 (MVSAWCSIALALLLALHEGKG). A propeptide spanning residues 22–43 (QAAATLEQPASAPKGRGPHLRF) is cleaved from the precursor. Cystine bridges form between cysteine 46/cysteine 60 and cysteine 48/cysteine 56. Residues 67-175 (VNTAGQTAPY…IPAYSRWRKR (109 aa)) constitute a propeptide that is removed on maturation. Positions 93–108 (CECSTAGDSACATFCH) are endothelin-like.

Belongs to the endothelin/sarafotoxin family.

The protein localises to the secreted. Its function is as follows. Vasoconstrictor. The sequence is that of Endothelin-2 (Edn2) from Mus musculus (Mouse).